A 617-amino-acid polypeptide reads, in one-letter code: Neurosecretory protein VGF (617 aa).

A signal peptide spans 1 to 23; sequence MKTFTLPASVLFCFLLLIQGLGA. Disordered regions lie at residues 29 to 75, 93 to 204, and 239 to 262; these read PDVF…GELF, RPAS…ESPG, and SESAPLPETHQFGEGVSSPKTHLG. The segment covering 48 to 64 has biased composition (basic and acidic residues); that stretch reads AVSRPKDDGVPEVRAAR. Acidic residues predominate over residues 149-160; sequence DPEEDDRSEELE. Low complexity predominate over residues 182–197; it reads ETAAAETETRTHTLTR. At Gln-313 the chain carries Pyrrolidone carboxylic acid. The segment covering 345–364 has biased composition (basic and acidic residues); sequence RQRDLGGRELQETQQERENE. The segment at 345 to 599 is disordered; that stretch reads RQRDLGGREL…EEADAEERRL (255 aa). Residues 378-397 show a composition bias toward acidic residues; it reads EDDVGEEDEEAAEAEAEAEE. The segment covering 418–436 has biased composition (basic and acidic residues); sequence AEDKRSQEEAPGHRRKDAE. Position 423 is a phosphoserine (Ser-423). Acidic residues predominate over residues 437–452; it reads GAEEGGEEDDDDEEMD. A compositionally biased stretch (pro residues) spans 491–501; that stretch reads PPEPVPPPRAA. Residues 577–599 show a composition bias toward basic and acidic residues; that stretch reads HHPDLEAQARRAQEEADAEERRL.

As to quaternary structure, interacts with HSPA8 on cell membrane. Interacts with C3AR1. Interacts with C1QBP.

The protein localises to the secreted. It is found in the cytoplasmic vesicle. Its subcellular location is the secretory vesicle. Its function is as follows. Secreted polyprotein that is packaged and proteolytically processed by prohormone convertases PCSK1 and PCSK2 in a cell-type-specific manner. VGF and peptides derived from its processing play many roles in neurogenesis and neuroplasticity associated with learning, memory, depression and chronic pain. In terms of biological role, plays a role in the control of body fluid homeostasis by regulating vasopressin release. Suppresses presynaptic glutamatergic neurons connected to vasopressin neurons. Functionally, plays a role in the control of body fluid homeostasis by regulating vasopressin release. Activates GABAergic interneurons which are inhibitory neurons of the nervous system and thereby suppresses presynaptic glutamatergic neurons. Also stimulates feeding behavior in an orexin-dependent manner in the hypothalamus. Functions as a positive regulator for the activation of orexin neurons resulting in elevated gastric acid secretion and gastric emptying. Secreted multifunctional peptide that interacts with different receptors and thereby plays multiple physiological roles including modulation of energy expenditure, pain, response to stress, gastric regulation as well as lipolysis. Activates the G-protein-coupled receptor C3AR1 via a folding-upon-binding mechanism leading to enhanced lipolysis in adipocytes. Interacts with gC1qR receptor in macrophages and microglia causing increased levels of intracellular calcium and hypersensitivity. Its function is as follows. Plays a role in the regulation of memory formation and depression-related behaviors potentially by influencing synaptic plasticity and neurogenesis. Induces acute and transient activation of the NTRK2/TRKB receptor and subsequent CREB phosphorylation. Also induces insulin secretion in insulinoma cells by increasing intracellular calcium mobilization. This chain is Neurosecretory protein VGF, found in Mus musculus (Mouse).